A 215-amino-acid polypeptide reads, in one-letter code: Probable transaldolase (215 aa).

Residue Lys-83 is the Schiff-base intermediate with substrate of the active site.

Belongs to the transaldolase family. Type 3B subfamily.

The protein resides in the cytoplasm. The enzyme catalyses D-sedoheptulose 7-phosphate + D-glyceraldehyde 3-phosphate = D-erythrose 4-phosphate + beta-D-fructose 6-phosphate. Its pathway is carbohydrate degradation; pentose phosphate pathway; D-glyceraldehyde 3-phosphate and beta-D-fructose 6-phosphate from D-ribose 5-phosphate and D-xylulose 5-phosphate (non-oxidative stage): step 2/3. Its function is as follows. Transaldolase is important for the balance of metabolites in the pentose-phosphate pathway. In Methanococcus maripaludis (strain C5 / ATCC BAA-1333), this protein is Probable transaldolase.